The chain runs to 236 residues: Cytochrome b-c1 complex subunit Rieske-4, mitochondrial (236 aa).

A mitochondrion-targeting transit peptide spans 1–24; that stretch reads MINFGSCWGLASVTSNSFSIISGF. Residues 25–73 are Mitochondrial matrix-facing; the sequence is SSNSVSHAHDMGLVPDLPPTVAAIKNPTSKIVYDEHNHERYPPGDPSKR. Residues 74-96 form a helical membrane-spanning segment; the sequence is AFAYFVLTGGRFVYASLVRLLIL. Over 97 to 236 the chain is Mitochondrial intermembrane; the sequence is KFVLSMSASK…FLEENKLLIG (140 aa). Residues 146-234 form the Rieske domain; sequence INLANSVDLG…YSFLEENKLL (89 aa). [2Fe-2S] cluster is bound by residues cysteine 179, histidine 181, cysteine 198, and histidine 201. An intrachain disulfide couples cysteine 184 to cysteine 200.

Belongs to the Rieske iron-sulfur protein family. Component of the ubiquinol-cytochrome c oxidoreductase (cytochrome b-c1 complex, complex III, CIII), a multisubunit enzyme composed of 3 respiratory subunits cytochrome b, cytochrome c1 and Rieske protein, 2 core protein subunits, and several low-molecular weight protein subunits. The complex exists as an obligatory dimer and forms supercomplexes (SCs) in the inner mitochondrial membrane with cytochrome c oxidase (complex IV, CIV). [2Fe-2S] cluster is required as a cofactor.

The protein resides in the mitochondrion inner membrane. It carries out the reaction a quinol + 2 Fe(III)-[cytochrome c](out) = a quinone + 2 Fe(II)-[cytochrome c](out) + 2 H(+)(out). Its function is as follows. Component of the ubiquinol-cytochrome c oxidoreductase, a multisubunit transmembrane complex that is part of the mitochondrial electron transport chain which drives oxidative phosphorylation. The respiratory chain contains 3 multisubunit complexes succinate dehydrogenase (complex II, CII), ubiquinol-cytochrome c oxidoreductase (cytochrome b-c1 complex, complex III, CIII) and cytochrome c oxidase (complex IV, CIV), that cooperate to transfer electrons derived from NADH and succinate to molecular oxygen, creating an electrochemical gradient over the inner membrane that drives transmembrane transport and the ATP synthase. The cytochrome b-c1 complex catalyzes electron transfer from ubiquinol to cytochrome c, linking this redox reaction to translocation of protons across the mitochondrial inner membrane, with protons being carried across the membrane as hydrogens on the quinol. In the process called Q cycle, 2 protons are consumed from the matrix, 4 protons are released into the intermembrane space and 2 electrons are passed to cytochrome c. The Rieske protein is a catalytic core subunit containing a [2Fe-2S] iron-sulfur cluster. It cycles between 2 conformational states during catalysis to transfer electrons from the quinol bound in the Q(0) site in cytochrome b to cytochrome c1. This is Cytochrome b-c1 complex subunit Rieske-4, mitochondrial from Nicotiana tabacum (Common tobacco).